Here is a 585-residue protein sequence, read N- to C-terminus: Cytoplasmic polyadenylation element-binding protein 1 (585 aa).

Residues 1–32 (MQHQLKACGDVKTSSRAQQNHRRSTAASAKRS) form a disordered region. 2 consecutive RRM domains span residues 251–356 (RKVF…PWRL) and 373–444 (RTVF…HAET). The disordered stretch occupies residues 513-533 (DQTRILPRPPHHPAAHHSHQR). Over residues 521 to 532 (PPHHPAAHHSHQ) the composition is skewed to basic residues.

In terms of assembly, interacts with fbf-1.

In terms of biological role, cytoplasmic polyadenylation element binding protein that binds to and regulates the translation of specific mRNAs. Essential for progression through meiosis. Involved in spermatogenesis. The sequence is that of Cytoplasmic polyadenylation element-binding protein 1 (cpb-1) from Caenorhabditis briggsae.